The primary structure comprises 690 residues: Molting protein mlt-10 (690 aa).

The first 18 residues, 1–18, serve as a signal peptide directing secretion; it reads MRNLNLILFTALAAVTYA. 2 N-linked (GlcNAc...) asparagine glycosylation sites follow: Asn-42 and Asn-204. The stretch at 219 to 285 forms a coiled coil; it reads IKKLGEEAKR…MRKKEADEIR (67 aa). Asn-305 and Asn-415 each carry an N-linked (GlcNAc...) asparagine glycan. Helical transmembrane passes span 514–534, 544–564, 579–599, 618–638, and 643–663; these read PFIL…FIVL, LSPA…PLIL, FSPI…PGVF, VFTP…TPMV, and ILSP…FAVV.

The protein belongs to the mlt-10-like family. Expressed in the major body hypodermal syncytium (Hyp7), the dorsal and ventral ridges of the hypodermis, hypodermal cells in the head and tail, and the pharyngeal myoepithelium, but not the lateral seam cells.

It is found in the membrane. The protein resides in the secreted. In terms of biological role, required for the efficient removal of larval cuticles during the molting cycle as well as the synthesis of new cuticles. This chain is Molting protein mlt-10, found in Caenorhabditis elegans.